Reading from the N-terminus, the 479-residue chain is Anaerobic nitric oxide reductase flavorubredoxin (479 aa).

The tract at residues 30–210 (LRGSSYNSYL…PFSRLVTPKI (181 aa)) is zinc metallo-hydrolase. The Fe cation site is built by H79, E81, D83, H147, D166, and H227. One can recognise a Flavodoxin-like domain in the interval 254 to 393 (ITIFYDTMSN…LCREHGREIA (140 aa)). Residues 260–264 (TMSNN) and 342–369 (AFGS…EMSL) contribute to the FMN site. A Rubredoxin-like domain is found at 423–479 (GPRMQCSVCQWIYDPAKGEPMQDVAPGTPWSEVPDNFLCPECSLGKDVFEELASEAK). Fe cation is bound by residues C428, C431, C461, and C464.

This sequence in the N-terminal section; belongs to the zinc metallo-hydrolase group 3 family. In terms of assembly, homotetramer. Fe cation serves as cofactor. It depends on FMN as a cofactor.

The protein localises to the cytoplasm. It participates in nitrogen metabolism; nitric oxide reduction. Its function is as follows. Anaerobic nitric oxide reductase; uses NADH to detoxify nitric oxide (NO), protecting several 4Fe-4S NO-sensitive enzymes. Has at least 2 reductase partners, only one of which (NorW, flavorubredoxin reductase) has been identified. NO probably binds to the di-iron center; electrons enter from the reductase at rubredoxin and are transferred sequentially to the FMN center and the di-iron center. Also able to function as an aerobic oxygen reductase. This chain is Anaerobic nitric oxide reductase flavorubredoxin (norV), found in Escherichia coli (strain K12 / DH10B).